The chain runs to 582 residues: Potassium voltage-gated channel subfamily KQT member 1 (582 aa).

Over 1 to 31 (RVSIYSARRPLLARTHIQGRVYNFLERPTGW) the chain is Cytoplasmic. Residues 32-53 (KCFVYHFAVFLIVLVCLIFSVL) form a helical membrane-spanning segment. Topologically, residues 54 to 64 (STIEQYVALAT) are extracellular. Residues 65-87 (GTLFWMEIVLVVFFGTEYVVRLW) traverse the membrane as a helical segment. Topologically, residues 88-103 (SAGCRSKYVGVWGRLR) are cytoplasmic. A helical membrane pass occupies residues 104 to 129 (FARKPISIIDLIVVLASMVVLCVGSK). Residues 130 to 137 (GQVFATSA) are Extracellular-facing. The chain crosses the membrane as a helical; Voltage-sensor span at residues 138–153 (IRGIRFLQILRMLHVD). The interaction with KCNE3 stretch occupies residues 149 to 157 (MLHVDRQGG). Over 154–171 (RQGGTWRLLGSVVFIHRQ) the chain is Cytoplasmic. Gln-155 is an a 1,2-diacyl-sn-glycero-3-phospho-(1D-myo-inositol-4,5-bisphosphate) binding site. A helical membrane pass occupies residues 172 to 194 (ELITTLYIGFLGLIFSSYFVYLA). Residues 195–210 (EKDAVNESGQVEFGSY) lie on the Extracellular side of the membrane. N-linked (GlcNAc...) asparagine glycosylation is present at Asn-200. The pore-forming intramembrane region spans 211–231 (ADALWWGVVTVTTIGYGDKVP). At 232 to 233 (QT) the chain is on the extracellular side. The chain crosses the membrane as a helical span at residues 234-259 (WVGKTIASCFSVFAISFFALPAGILG). The Cytoplasmic portion of the chain corresponds to 260-582 (SGFALKVQQK…VPRRGPEEGS (323 aa)). Residues 281–293 (AAASLIQTAWRCY) are interaction with CALM. 2 positions are modified to phosphoserine: Ser-318 and Ser-320. An interaction with CALM; calcium-dependent region spans residues 426–440 (KVIRRMQYFVAKKKF). An interaction with KCNE1 C-terminus region spans residues 446-483 (PYDVRDVIEQYSQGHLNLMVRIKELQRRLDQSIGKPSL). The stretch at 496–532 (SNTIGARLNRVEDKVAQLDQRLVLITDMLQQLLSLHH) forms a coiled coil. An interaction with AKAP9 region spans residues 499 to 527 (IGARLNRVEDKVAQLDQRLVLITDMLQQL). The interval 500–531 (GARLNRVEDKVAQLDQRLVLITDMLQQLLSLH) is C-terminal assembly domain (tetramerization). A disordered region spans residues 530–582 (LHHGGPPGSRPPSGGGAQVQPCGPTNPELFLPGNALPTYEQLTVPRRGPEEGS).

Belongs to the potassium channel family. KQT (TC 1.A.1.15) subfamily. Kv7.1/KCNQ1 sub-subfamily. As to quaternary structure, tetramer. Heterotetramer with KCNE1; targets to the membrane raft. Interacts (via C-terminus) with CALM; forms a heterooctameric structure (with 4:4 KCNQ1:CALM stoichiometry) in a calcium-independent manner. Interacts with AKAP9; targets protein kinase A (PKA) catalytic and regulatory subunits and protein phosphatase 1 (PP1) to the KCNQ1-KCNE1 complex, allowing PKA-mediated phosphorylation and increase of delayed rectifier potassium channel activity. Interacts with KCNE2; form a heterooligomer complex that targets to the membrane raft and leading to currents with an apparently instantaneous activation, a rapid deactivation process and a linear current-voltage relationship and decreases the amplitude of the outward current. Interacts with AP2M1; mediates estrogen-induced internalization via clathrin-coated vesicles. Interacts with NEDD4L; promotes internalization and decreases I(Ks) currents. Interacts with USP2; counteracts the NEDD4L-specific down-regulation of I(Ks) and restore plasma membrane localization. Heterotetramer with KCNQ5; has a voltage-gated potassium channel activity. Interacts with KCNE3; four KCNE3 molecules are bound to one KCNQ1 tetramer (4:4 KCNQ1:KCNE3 stoichiometry); alters membrane raft localization; affects KCNQ1 structure and gating properties. Interacts with KCNE4; impairs KCNQ1 localization in lipid rafts and inhibits voltage-gated potassium channel activity. Interacts with KCNE5; impairs KCNQ1 localization in lipid rafts and only conducts current upon strong and continued depolarization. Post-translationally, phosphorylated by PKA; increases delayed rectifier potassium channel activity of the KCNQ1-KCNE1 complex through a macromolecular complex that includes PKA, PP1, and the targeting protein AKAP9. Ubiquitinated by NEDD4L; promotes internalization. The ubiquitinylated form is internalized through a clathrin-mediated endocytosis by interacting with AP2M1 and is recycled back to the cell membrane via RAB4A and RAB11A. In terms of processing, deubiquitinated by USP2; counteracts the NEDD4L-specific down-regulation of I(Ks) and restores the membrane localization.

It is found in the cell membrane. The protein localises to the cytoplasmic vesicle membrane. The protein resides in the early endosome. Its subcellular location is the membrane raft. It localises to the endoplasmic reticulum. It is found in the basolateral cell membrane. The catalysed reaction is K(+)(in) = K(+)(out). With respect to regulation, PIP2 molecule is essential to activate KCNQ channels by inducing the coupling of the voltage-sensing domain (VSD) and the pore-forming domain (PD). Upon channel activation, PIP2 disrupts the VSD-calmodulin/CALM interactions, causing the release of CALM from the VSD which triggers the opening of the gate. Calcium potentiates KCNQ1 channel current through calcium-bound CALM. Calcium-bound CALM competes with PIP2 to stabilize the channel open state. Its function is as follows. Pore-forming subunit of the voltage-gated potassium (Kv) channel involved in the regulation of cardiomyocyte excitability and important in normal development and functions of myocardium, inner ear, stomach and colon. Associates with KCNE beta subunits that modulates current kinetics. Induces a voltage-dependent by rapidly activating and slowly deactivating potassium-selective outward current. Also promotes a delayed voltage activated potassium current showing outward rectification characteristic. During beta-adrenergic receptor stimulation participates in cardiac repolarization by associating with KCNE1 to form the I(Ks) cardiac potassium current that increases the amplitude and slows down the activation kinetics of outward potassium current I(Ks). Muscarinic agonist oxotremorine-M strongly suppresses KCNQ1/KCNE1 current. When associated with KCNE3, forms the potassium channel that is important for cyclic AMP-stimulated intestinal secretion of chloride ions. This interaction with KCNE3 is reduced by 17beta-estradiol, resulting in the reduction of currents. During conditions of increased substrate load, maintains the driving force for proximal tubular and intestinal sodium ions absorption, gastric acid secretion, and cAMP-induced jejunal chloride ions secretion. Allows the provision of potassium ions to the luminal membrane of the secretory canaliculus in the resting state as well as during stimulated acid secretion. When associated with KCNE2, forms a heterooligomer complex leading to currents with an apparently instantaneous activation, a rapid deactivation process and a linear current-voltage relationship and decreases the amplitude of the outward current. When associated with KCNE4, inhibits voltage-gated potassium channel activity. When associated with KCNE5, this complex only conducts current upon strong and continued depolarization. Also forms a heterotetramer with KCNQ5 that has a voltage-gated potassium channel activity. Binds with phosphatidylinositol 4,5-bisphosphate. This is Potassium voltage-gated channel subfamily KQT member 1 from Felis catus (Cat).